The chain runs to 229 residues: Zinc finger matrin-type protein 4 (229 aa).

2 Matrin-type zinc fingers span residues 14–44 (SYCK…KVRL) and 72–106 (DKNK…LKLL). Residues 116-135 (TATPLSPLKPPRMDTAPVVA) form a disordered region. 2 consecutive Matrin-type zinc fingers follow at residues 145-175 (RYCG…NAAR) and 198-228 (YRCT…NLKN).

It is found in the nucleus. The polypeptide is Zinc finger matrin-type protein 4 (ZMAT4) (Homo sapiens (Human)).